Here is a 344-residue protein sequence, read N- to C-terminus: tRNA N6-adenosine threonylcarbamoyltransferase (344 aa).

Fe cation is bound by residues H111 and H115. Residues 134 to 138, D167, G180, and N273 each bind substrate; that span reads LVSGG. Residue D301 participates in Fe cation binding.

This sequence belongs to the KAE1 / TsaD family. The cofactor is Fe(2+).

Its subcellular location is the cytoplasm. The enzyme catalyses L-threonylcarbamoyladenylate + adenosine(37) in tRNA = N(6)-L-threonylcarbamoyladenosine(37) in tRNA + AMP + H(+). Required for the formation of a threonylcarbamoyl group on adenosine at position 37 (t(6)A37) in tRNAs that read codons beginning with adenine. Is involved in the transfer of the threonylcarbamoyl moiety of threonylcarbamoyl-AMP (TC-AMP) to the N6 group of A37, together with TsaE and TsaB. TsaD likely plays a direct catalytic role in this reaction. This Cupriavidus pinatubonensis (strain JMP 134 / LMG 1197) (Cupriavidus necator (strain JMP 134)) protein is tRNA N6-adenosine threonylcarbamoyltransferase.